A 296-amino-acid polypeptide reads, in one-letter code: Protoheme IX farnesyltransferase 1 (296 aa).

The next 8 helical transmembrane spans lie at I14–A34, L41–L61, I86–A106, F108–I128, I141–G161, L165–L185, A230–V250, and Y274–F294.

The protein belongs to the UbiA prenyltransferase family. Protoheme IX farnesyltransferase subfamily.

It localises to the cell membrane. The enzyme catalyses heme b + (2E,6E)-farnesyl diphosphate + H2O = Fe(II)-heme o + diphosphate. It functions in the pathway porphyrin-containing compound metabolism; heme O biosynthesis; heme O from protoheme: step 1/1. Converts heme B (protoheme IX) to heme O by substitution of the vinyl group on carbon 2 of heme B porphyrin ring with a hydroxyethyl farnesyl side group. The protein is Protoheme IX farnesyltransferase 1 of Cenarchaeum symbiosum (strain A).